A 386-amino-acid polypeptide reads, in one-letter code: Putative 8-amino-7-oxononanoate synthase (386 aa).

Residue arginine 26 coordinates substrate. Position 113–114 (glycine 113–tyrosine 114) interacts with pyridoxal 5'-phosphate. Histidine 138 provides a ligand contact to substrate. Pyridoxal 5'-phosphate-binding positions include serine 186, aspartate 211–histidine 214, and threonine 240–lysine 243. N6-(pyridoxal phosphate)lysine is present on lysine 243. Threonine 352 contacts substrate.

It belongs to the class-II pyridoxal-phosphate-dependent aminotransferase family. BioF subfamily. In terms of assembly, homodimer. The cofactor is pyridoxal 5'-phosphate.

The catalysed reaction is 6-carboxyhexanoyl-[ACP] + L-alanine + H(+) = (8S)-8-amino-7-oxononanoate + holo-[ACP] + CO2. The protein operates within cofactor biosynthesis; biotin biosynthesis. In terms of biological role, catalyzes the decarboxylative condensation of pimeloyl-[acyl-carrier protein] and L-alanine to produce 8-amino-7-oxononanoate (AON), [acyl-carrier protein], and carbon dioxide. The sequence is that of Putative 8-amino-7-oxononanoate synthase (bioF) from Phenylobacterium zucineum (strain HLK1).